We begin with the raw amino-acid sequence, 96 residues long: Myoglobin (96 aa).

A Globin domain is found at 1–96 (GLSDGEWQLV…AKTKELGFLG (96 aa)). Phosphoserine is present on S3. H61 contributes to the nitrite binding site. H61 is an O2 binding site. Phosphothreonine is present on T64.

Belongs to the globin family. In terms of assembly, monomeric.

Its subcellular location is the cytoplasm. The protein resides in the sarcoplasm. It catalyses the reaction Fe(III)-heme b-[protein] + nitric oxide + H2O = Fe(II)-heme b-[protein] + nitrite + 2 H(+). The enzyme catalyses H2O2 + AH2 = A + 2 H2O. Monomeric heme protein which primary function is to store oxygen and facilitate its diffusion within muscle tissues. Reversibly binds oxygen through a pentacoordinated heme iron and enables its timely and efficient release as needed during periods of heightened demand. Depending on the oxidative conditions of tissues and cells, and in addition to its ability to bind oxygen, it also has a nitrite reductase activity whereby it regulates the production of bioactive nitric oxide. Under stress conditions, like hypoxia and anoxia, it also protects cells against reactive oxygen species thanks to its pseudoperoxidase activity. In Ailuropoda melanoleuca (Giant panda), this protein is Myoglobin (MB).